A 1102-amino-acid chain; its full sequence is WD repeat-containing protein 72 (1102 aa).

8 WD repeats span residues 15–54, 60–102, 160–197, 318–362, 402–441, 459–504, 507–552, and 555–594; these read APPHSITAIMITDDQRTIVTGSQEGQLCLWNLSHELKISA, GHSA…CMEK, NCMCIVHSMRIQEDSLLVVSVAGELKVWDLSSSINSIQ, KEQS…VSKF, AGTAVVTSSEYIPSLDKLICGCEDGTIIITQALNAAKARL, GHHQ…ILHK, LEAG…CLLH, and KHLFPVRMIKWHPVENFLIVGCADDSVYIWEIETGTLERH. Ser-1081 and Ser-1083 each carry phosphoserine.

Its subcellular location is the cytoplasmic vesicle. Plays a major role in formation of tooth enamel. Specifically required during the maturation phase of amelogenesis for normal formation of the enamel matrix and clearance of enamel proteins. May be involved in localization of the calcium transporter SLC24A4 to the ameloblast cell membrane. This Homo sapiens (Human) protein is WD repeat-containing protein 72 (WDR72).